A 356-amino-acid chain; its full sequence is Peptide-N(4)-(N-acetyl-beta-glucosaminyl)asparagine amidase (356 aa).

Zn(2+)-binding residues include cysteine 129, cysteine 132, cysteine 163, and cysteine 166. Cysteine 189 serves as the catalytic Nucleophile. Residues histidine 216 and aspartate 233 contribute to the active site. Glutamate 236 is a binding site for substrate. A disordered region spans residues 300–356; that stretch reads IRQNLSPSEKEELKREDEAEERELASYNADEPQEAQMPRQSGSVEWTKARGEGGSDD. Composition is skewed to basic and acidic residues over residues 307 to 316 and 346 to 356; these read SEKEELKRED and TKARGEGGSDD.

Belongs to the transglutaminase-like superfamily. PNGase family. The cofactor is Zn(2+).

Its subcellular location is the cytoplasm. The catalysed reaction is Hydrolysis of an N(4)-(acetyl-beta-D-glucosaminyl)asparagine residue in which the glucosamine residue may be further glycosylated, to yield a (substituted) N-acetyl-beta-D-glucosaminylamine and a peptide containing an aspartate residue.. In terms of biological role, specifically deglycosylates the denatured form of N-linked glycoproteins in the cytoplasm and assists their proteasome-mediated degradation. Cleaves the beta-aspartyl-glucosamine (GlcNAc) of the glycan and the amide side chain of Asn, converting Asn to Asp. Prefers proteins containing high-mannose over those bearing complex type oligosaccharides. Can recognize misfolded proteins in the endoplasmic reticulum that are exported to the cytosol to be destroyed and deglycosylate them, while it has no activity toward native proteins. Deglycosylation is a prerequisite for subsequent proteasome-mediated degradation of some, but not all, misfolded glycoproteins. This is Peptide-N(4)-(N-acetyl-beta-glucosaminyl)asparagine amidase (PNG1) from Yarrowia lipolytica (strain CLIB 122 / E 150) (Yeast).